We begin with the raw amino-acid sequence, 449 residues long: COP9 signalosome complex subunit 2 (449 aa).

The disordered stretch occupies residues 1-32; sequence MSDDEDMMYDDDEYFDDDEDQDQNDSESEGVE. In terms of domain architecture, PCI spans 251–420; the sequence is AEKEWEKAHT…QQLELDTAKS (170 aa).

It belongs to the CSN2 family. In terms of assembly, component of the CSN complex. The holocomplex is comprised of 8 subunits csn1-8. In the complex, it probably interacts directly with csn1, csn3, csn5, csn6, csn7 and csn8.

Its subcellular location is the cytoplasm. It localises to the nucleus. In terms of biological role, essential component of the COP9 signalosome complex (CSN), a complex involved in various cellular and developmental processes. The CSN complex is an essential regulator of the ubiquitin (Ubl) conjugation pathway by mediating the deneddylation of the cullin subunits of E3 ligase complexes, leading to modify the Ubl ligase activity. This chain is COP9 signalosome complex subunit 2 (csn2), found in Dictyostelium discoideum (Social amoeba).